The following is a 199-amino-acid chain: UPF0056 membrane protein bbp_399 (199 aa).

The next 6 helical transmembrane spans lie at 7–29 (VTIL…SILK), 39–58 (ILIR…LFAG), 71–93 (TVSV…PTYE), 108–130 (FLVP…MLLS), 137–156 (ILYL…VILL), and 176–198 (LMGL…SWFY).

The protein belongs to the UPF0056 (MarC) family.

It is found in the cell membrane. This Buchnera aphidicola subsp. Baizongia pistaciae (strain Bp) protein is UPF0056 membrane protein bbp_399.